Consider the following 120-residue polypeptide: NAD(P)H-quinone oxidoreductase subunit 3, chloroplastic (120 aa).

A run of 3 helical transmembrane segments spans residues 7–27 (YQTF…ALLI), 64–84 (SFAL…PWAM), and 89–109 (LGIF…IGLV).

Belongs to the complex I subunit 3 family. In terms of assembly, NDH is composed of at least 16 different subunits, 5 of which are encoded in the nucleus.

The protein resides in the plastid. Its subcellular location is the chloroplast thylakoid membrane. The enzyme catalyses a plastoquinone + NADH + (n+1) H(+)(in) = a plastoquinol + NAD(+) + n H(+)(out). The catalysed reaction is a plastoquinone + NADPH + (n+1) H(+)(in) = a plastoquinol + NADP(+) + n H(+)(out). Its function is as follows. NDH shuttles electrons from NAD(P)H:plastoquinone, via FMN and iron-sulfur (Fe-S) centers, to quinones in the photosynthetic chain and possibly in a chloroplast respiratory chain. The immediate electron acceptor for the enzyme in this species is believed to be plastoquinone. Couples the redox reaction to proton translocation, and thus conserves the redox energy in a proton gradient. The sequence is that of NAD(P)H-quinone oxidoreductase subunit 3, chloroplastic from Psilotum nudum (Whisk fern).